The following is a 134-amino-acid chain: Calcitonin gene-related peptide 2 (134 aa).

An N-terminal signal peptide occupies residues M1 to A26. A propeptide spanning residues A27–Q86 is cleaved from the precursor. Residues L65 to N91 form a disordered region. Low complexity predominate over residues K77–S89. C90 and C95 are oxidised to a cystine. Phenylalanine amide is present on F125. Residues D131–V134 constitute a propeptide that is removed on maturation.

This sequence belongs to the calcitonin family.

Its subcellular location is the secreted. Functionally, CALCB/CGRP2 is a peptide hormone that induces vasodilation mediated by the CALCRL-RAMP1 receptor complex. Dilates a variety of vessels including the coronary, cerebral and systemic vasculature. Its abundance in the CNS also points toward a neurotransmitter or neuromodulator role. The chain is Calcitonin gene-related peptide 2 from Rattus norvegicus (Rat).